We begin with the raw amino-acid sequence, 153 residues long: Late embryogenesis abundant protein B19.4 (153 aa).

Residues 1-153 are disordered; it reads MASGQQERSE…IDESKFKTKS (153 aa). Basic and acidic residues-rich tracts occupy residues 7-19, 32-122, and 133-153; these read ERSELDRMAREGE, EAQE…EMGR, and GGERAAREGIDIDESKFKTKS. Tandem repeats lie at residues 43–62, 63–82, 83–102, and 103–122. The segment at 43–122 is 4 X 20 AA tandem repeats; sequence RGGQTRKEQL…GEEGYREMGR (80 aa).

It belongs to the small hydrophilic plant seed protein family.

Its function is as follows. Lea proteins are late embryonic proteins abundant in higher plant seed embryos. The protein is Late embryogenesis abundant protein B19.4 (B19.4) of Hordeum vulgare (Barley).